The following is a 447-amino-acid chain: Tubulin beta chain (447 aa).

Glutamine 11, glutamate 69, serine 138, glycine 142, threonine 143, glycine 144, asparagine 204, and asparagine 226 together coordinate GTP. Glutamate 69 provides a ligand contact to Mg(2+). A disordered region spans residues 427-447; sequence EAHMDDEEAEEAYEDEAPPEE. Acidic residues predominate over residues 430 to 447; sequence MDDEEAEEAYEDEAPPEE.

This sequence belongs to the tubulin family. In terms of assembly, dimer of alpha and beta chains. A typical microtubule is a hollow water-filled tube with an outer diameter of 25 nm and an inner diameter of 15 nM. Alpha-beta heterodimers associate head-to-tail to form protofilaments running lengthwise along the microtubule wall with the beta-tubulin subunit facing the microtubule plus end conferring a structural polarity. Microtubules usually have 13 protofilaments but different protofilament numbers can be found in some organisms and specialized cells. It depends on Mg(2+) as a cofactor.

The protein localises to the cytoplasm. Its subcellular location is the cytoskeleton. Functionally, tubulin is the major constituent of microtubules, a cylinder consisting of laterally associated linear protofilaments composed of alpha- and beta-tubulin heterodimers. Microtubules grow by the addition of GTP-tubulin dimers to the microtubule end, where a stabilizing cap forms. Below the cap, tubulin dimers are in GDP-bound state, owing to GTPase activity of alpha-tubulin. The polypeptide is Tubulin beta chain (TBB1) (Uromyces fabae (Rust fungus)).